The chain runs to 193 residues: Ion-translocating oxidoreductase complex subunit A (193 aa).

6 consecutive transmembrane segments (helical) span residues Ala-5–Leu-25, Ile-39–Val-59, Phe-62–Ala-82, Leu-102–Leu-122, Thr-134–Ile-154, and Ser-171–Val-191.

This sequence belongs to the NqrDE/RnfAE family. In terms of assembly, the complex is composed of six subunits: RnfA, RnfB, RnfC, RnfD, RnfE and RnfG.

Its subcellular location is the cell inner membrane. Part of a membrane-bound complex that couples electron transfer with translocation of ions across the membrane. The protein is Ion-translocating oxidoreductase complex subunit A of Pectobacterium carotovorum subsp. carotovorum (strain PC1).